Reading from the N-terminus, the 34-residue chain is Photosystem II reaction center protein M (34 aa).

The helical transmembrane segment at 6–26 threads the bilayer; that stretch reads LGAIATALFVFIPCVFLILLY.

The protein belongs to the PsbM family. As to quaternary structure, PSII is composed of 1 copy each of membrane proteins PsbA, PsbB, PsbC, PsbD, PsbE, PsbF, PsbH, PsbI, PsbJ, PsbK, PsbL, PsbM, PsbT, PsbX, PsbY, PsbZ, Psb30/Ycf12, peripheral proteins PsbO, CyanoQ (PsbQ), PsbU, PsbV and a large number of cofactors. It forms dimeric complexes.

It is found in the cellular thylakoid membrane. In terms of biological role, one of the components of the core complex of photosystem II (PSII). PSII is a light-driven water:plastoquinone oxidoreductase that uses light energy to abstract electrons from H(2)O, generating O(2) and a proton gradient subsequently used for ATP formation. It consists of a core antenna complex that captures photons, and an electron transfer chain that converts photonic excitation into a charge separation. This subunit is found at the monomer-monomer interface. The chain is Photosystem II reaction center protein M from Acaryochloris marina (strain MBIC 11017).